The following is a 63-amino-acid chain: DNA-directed RNA polymerase 7 kDa subunit (63 aa).

The protein belongs to the poxviridae DNA-directed RNA polymerase 7 kDa subunit family. The DNA-dependent RNA polymerase used for intermediate and late genes expression consists of eight subunits 147 kDa, 133 kDa, 35 kDa, 30 kDa, 22 kDa, 19 kDa, 18 kDa and 7 kDa totalling more than 500 kDa in mass. The same holoenzyme, with the addition of the transcription-specificity factor RAP94, is used for early gene expression.

The protein localises to the virion. It carries out the reaction RNA(n) + a ribonucleoside 5'-triphosphate = RNA(n+1) + diphosphate. In terms of biological role, part of the DNA-dependent RNA polymerase which catalyzes the transcription of viral DNA into RNA using the four ribonucleoside triphosphates as substrates. Responsible for the transcription of early, intermediate and late genes. DNA-dependent RNA polymerase associates with the early transcription factor (ETF) thereby allowing the early genes transcription. Late transcription, and probably also intermediate transcription, require newly synthesized RNA polymerase. The polypeptide is DNA-directed RNA polymerase 7 kDa subunit (RPO7) (Homo sapiens (Human)).